Reading from the N-terminus, the 329-residue chain is L-lactate dehydrogenase (329 aa).

NAD(+) contacts are provided by residues Val-18, Glu-39, Lys-46, Tyr-71, and 85-86; that span reads GA. Gln-88 and Arg-94 together coordinate substrate. Residues Ser-107, 124 to 126, and Ser-149 contribute to the NAD(+) site; that span reads AAN. 126–129 contributes to the substrate binding site; it reads NPVD. 154 to 157 lines the substrate pocket; the sequence is DSAR. Beta-D-fructose 1,6-bisphosphate-binding residues include Arg-159 and His-174. The Proton acceptor role is filled by His-181. Tyr-226 carries the phosphotyrosine modification. Residue Thr-235 coordinates substrate.

Belongs to the LDH/MDH superfamily. LDH family. Homotetramer.

Its subcellular location is the cytoplasm. The enzyme catalyses (S)-lactate + NAD(+) = pyruvate + NADH + H(+). It functions in the pathway fermentation; pyruvate fermentation to lactate; (S)-lactate from pyruvate: step 1/1. Allosterically activated by fructose 1,6-bisphosphate (FBP). Catalyzes the conversion of lactate to pyruvate. The sequence is that of L-lactate dehydrogenase from Streptococcus equinus (Streptococcus bovis).